Reading from the N-terminus, the 551-residue chain is Cytochrome P450 monooxygenase sdnQ (551 aa).

Residues Met1–Thr23 are disordered. Polar residues predominate over residues Ser8–Thr23. Asn21 is a glycosylation site (N-linked (GlcNAc...) asparagine). Residues Cys41–Tyr57 form a helical membrane-spanning segment. Cys491 is a binding site for heme.

The protein belongs to the cytochrome P450 family. Heme is required as a cofactor.

The protein resides in the membrane. Its pathway is antibiotic biosynthesis. Cytochrome P450 monooxygenase; part of the gene cluster that mediates the biosynthesis of sordarin and hypoxysordarin, glycoside antibiotics with a unique tetracyclic diterpene aglycone structure. First, the geranylgeranyl diphosphate synthase sdnC constructs GGDP from farnesyl diphosphate and isopentenyl diphosphate. The diterpene cyclase sdnA then catalyzes the cyclization of GGDP to afford cycloaraneosene. Cycloaraneosene is then hydroxylated four times by the putative cytochrome P450 monooxygenases sdnB, sdnE, sdnF and sdnH to give a hydroxylated cycloaraneosene derivative such as cycloaraneosene-8,9,13,19-tetraol. Although the order of the hydroxylations is unclear, at least C8, C9 and C13 of the cycloaraneosene skeleton are hydroxylated before the sordaricin formation. Dehydration of the 13-hydroxy group of the hydroxylated cycloaraneosene derivative might be catalyzed by an unassigned hypothetical protein such as sdnG and sdnP to construct the cyclopentadiene moiety. The FAD-dependent oxidoreductase sdnN is proposed to catalyze the oxidation at C9 of the hydroxylated cycloaraneosene derivative and also catalyze the Baeyer-Villiger oxidation to give the lactone intermediate. The presumed lactone intermediate would be hydrolyzed to give an acrolein moiety and a carboxylate moiety. Then, [4+2]cycloaddition would occur between the acrolein moiety and the cyclopentadiene moiety to give sordaricin. SdnN might also be involved in the [4+2]cycloaddition after the hypothesized oxidation to accommodate the oxidized product and prompt the [4+2]cycloaddition. GDP-6-deoxy-D-altrose may be biosynthesized from GDP-D-mannose by the putative GDP-mannose-4,6-dehydratase sdnI and the short-chain dehydrogenase sdnK. The glycosyltransferase sdnJ catalyzes the attachment of 6-deoxy-D-altrose onto the 19-hydroxy group of sordaricin to give 4'-O-demethylsordarin. The methyltransferase sdnD would complete the biosynthesis of sordarin. Sordarin can be further modified into hypoxysordarin. The unique acyl chain at the 3'-hydroxy group of hypoxysordarin would be constructed by an iterative type I PKS sdnO and the trans-acting polyketide methyltransferase sdnL. SdnL would be responsible for the introduction of an alpha-methyl group of the polyketide chain. Alternatively, the beta-lactamase-like protein sdnR might be responsible for the cleavage and transfer of the polyketide chain from the PKS sdnO to sordarin. Two putative cytochrome P450 monooxygenases, sdnQ and sdnT, might catalyze the epoxidations of the polyketide chain to complete the biosynthesis of hypoxysordarin. Transcriptional regulators sdnM and sdnS are presumably encoded for the transcriptional regulation of the expression of the sdn gene cluster. The protein is Cytochrome P450 monooxygenase sdnQ of Sordaria araneosa (Pleurage araneosa).